The sequence spans 290 residues: Non-homologous end joining protein Ku (290 aa).

The Ku domain occupies 11 to 183; it reads TFGLISMPVR…EAPKITSEVK (173 aa). The tract at residues 253 to 290 is disordered; sequence MKDQKKGSRLAEVDKESTVQMTPKKPAVKERRGRKRVA. The span at 254 to 269 shows a compositional bias: basic and acidic residues; that stretch reads KDQKKGSRLAEVDKES.

The protein belongs to the prokaryotic Ku family. Homodimer. Interacts with LigD.

Its function is as follows. With LigD forms a non-homologous end joining (NHEJ) DNA repair enzyme, which repairs dsDNA breaks with reduced fidelity. Binds linear dsDNA with 5'- and 3'- overhangs but not closed circular dsDNA nor ssDNA. Recruits and stimulates the ligase activity of LigD. The chain is Non-homologous end joining protein Ku from Koribacter versatilis (strain Ellin345).